The following is a 202-amino-acid chain: Large ribosomal subunit protein bL17 (202 aa).

The interval 148 to 202 (DEAPAAESTDAAQVEAGGVEQPDTLPDADAPATADEGVEVDAAEVDPSDEKKDQA) is disordered. Positions 169–182 (PDTLPDADAPATAD) are enriched in low complexity. Residues 183–194 (EGVEVDAAEVDP) show a composition bias toward acidic residues.

The protein belongs to the bacterial ribosomal protein bL17 family. In terms of assembly, part of the 50S ribosomal subunit. Contacts protein L32.

This is Large ribosomal subunit protein bL17 from Kineococcus radiotolerans (strain ATCC BAA-149 / DSM 14245 / SRS30216).